We begin with the raw amino-acid sequence, 158 residues long: Crossover junction endodeoxyribonuclease RuvC (158 aa).

Residues D7, E67, and D139 contribute to the active site. Mg(2+) contacts are provided by D7, E67, and D139.

This sequence belongs to the RuvC family. As to quaternary structure, homodimer which binds Holliday junction (HJ) DNA. The HJ becomes 2-fold symmetrical on binding to RuvC with unstacked arms; it has a different conformation from HJ DNA in complex with RuvA. In the full resolvosome a probable DNA-RuvA(4)-RuvB(12)-RuvC(2) complex forms which resolves the HJ. Requires Mg(2+) as cofactor.

Its subcellular location is the cytoplasm. It carries out the reaction Endonucleolytic cleavage at a junction such as a reciprocal single-stranded crossover between two homologous DNA duplexes (Holliday junction).. In terms of biological role, the RuvA-RuvB-RuvC complex processes Holliday junction (HJ) DNA during genetic recombination and DNA repair. Endonuclease that resolves HJ intermediates. Cleaves cruciform DNA by making single-stranded nicks across the HJ at symmetrical positions within the homologous arms, yielding a 5'-phosphate and a 3'-hydroxyl group; requires a central core of homology in the junction. The consensus cleavage sequence is 5'-(A/T)TT(C/G)-3'. Cleavage occurs on the 3'-side of the TT dinucleotide at the point of strand exchange. HJ branch migration catalyzed by RuvA-RuvB allows RuvC to scan DNA until it finds its consensus sequence, where it cleaves and resolves the cruciform DNA. This chain is Crossover junction endodeoxyribonuclease RuvC, found in Prochlorococcus marinus (strain MIT 9211).